A 225-amino-acid chain; its full sequence is NAD(P)H-quinone oxidoreductase subunit K, chloroplastic (225 aa).

Residues cysteine 43, cysteine 44, cysteine 108, and cysteine 139 each contribute to the [4Fe-4S] cluster site.

It belongs to the complex I 20 kDa subunit family. In terms of assembly, NDH is composed of at least 16 different subunits, 5 of which are encoded in the nucleus. [4Fe-4S] cluster serves as cofactor.

It is found in the plastid. The protein localises to the chloroplast thylakoid membrane. The enzyme catalyses a plastoquinone + NADH + (n+1) H(+)(in) = a plastoquinol + NAD(+) + n H(+)(out). It carries out the reaction a plastoquinone + NADPH + (n+1) H(+)(in) = a plastoquinol + NADP(+) + n H(+)(out). NDH shuttles electrons from NAD(P)H:plastoquinone, via FMN and iron-sulfur (Fe-S) centers, to quinones in the photosynthetic chain and possibly in a chloroplast respiratory chain. The immediate electron acceptor for the enzyme in this species is believed to be plastoquinone. Couples the redox reaction to proton translocation, and thus conserves the redox energy in a proton gradient. The polypeptide is NAD(P)H-quinone oxidoreductase subunit K, chloroplastic (Oryza nivara (Indian wild rice)).